A 364-amino-acid polypeptide reads, in one-letter code: DNA replication and repair protein RecF (364 aa).

33 to 40 (GENGSGKT) provides a ligand contact to ATP.

Belongs to the RecF family.

It localises to the cytoplasm. In terms of biological role, the RecF protein is involved in DNA metabolism; it is required for DNA replication and normal SOS inducibility. RecF binds preferentially to single-stranded, linear DNA. It also seems to bind ATP. This is DNA replication and repair protein RecF from Rickettsia felis (strain ATCC VR-1525 / URRWXCal2) (Rickettsia azadi).